The chain runs to 532 residues: Invertase 1 (532 aa).

A signal peptide spans 1–19; that stretch reads MLLQAFLFLLAGFAAKISA. The N-linked (GlcNAc...) asparagine glycan is linked to Asn-23. Substrate-binding positions include 39–42 and Gln-60; that span reads WMND. Residue Asp-42 is part of the active site. A glycan (N-linked (GlcNAc...) asparagine) is linked at Asn-64. 102-103 contributes to the substrate binding site; sequence YS. N-linked (GlcNAc...) asparagine glycosylation is found at Asn-111, Asn-112, Asn-118, and Asn-165. Substrate is bound by residues 170–171 and Glu-223; that span reads RD. N-linked (GlcNAc...) asparagine glycosylation occurs at Asn-275. A substrate-binding site is contributed by Trp-311. N-linked (GlcNAc...) asparagine glycosylation is found at Asn-356, Asn-369, Asn-384, Asn-398, and Asn-512.

Belongs to the glycosyl hydrolase 32 family. Post-translationally, isoform Secreted is glycosylated. Isoform Intracellular is not glycosylated.

Its subcellular location is the cytoplasm. It is found in the secreted. It catalyses the reaction Hydrolysis of terminal non-reducing beta-D-fructofuranoside residues in beta-D-fructofuranosides.. This is Invertase 1 (SUC1) from Saccharomyces cerevisiae (Baker's yeast).